The chain runs to 512 residues: Norfluorocurarine oxidase (512 aa).

Residues 3–23 traverse the membrane as a helical segment; it reads LLLNPSLFSLLPLLLFIIFLF. Heme is bound at residue Cys453.

This sequence belongs to the cytochrome P450 family. It depends on heme as a cofactor.

It is found in the membrane. It catalyses the reaction norfluorocurarine + reduced [NADPH--hemoprotein reductase] + O2 = 18-hydroxynorfluorocurarine + oxidized [NADPH--hemoprotein reductase] + H2O + H(+). It participates in alkaloid biosynthesis. In terms of biological role, monooxygenase involved in the biosynthesis of curare monoterpene indole alkaloids (MIAs), natural products such as diaboline, a pharmacologically active compound used to regulate blood pressure. Curare alkaloids act as animal glycine receptor antagonists. Catalyzes the conversion of norfluorocurarine to 18-OH norfluorocurarine. This chain is Norfluorocurarine oxidase, found in Strychnos sp.